Reading from the N-terminus, the 189-residue chain is Cold-regulated 413 plasma membrane protein 3 (189 aa).

Topologically, residues 1 to 24 (MENIEYLNEIQAVAGKLIHSYGVP) are extracellular. The helical transmembrane segment at 25 to 45 (VMITLFLRWLASIVAVFLMIL) threads the bilayer. Residues 46 to 55 (DQTKWKYSNN) lie on the Cytoplasmic side of the membrane. Residues 56–76 (IMASLLAPYLFSSLPIVIFQV) traverse the membrane as a helical segment. Over 77 to 79 (LRN) the chain is Extracellular. A helical membrane pass occupies residues 80-100 (GVGKWIALLTVILRLFLPNHF). Residues 101–104 (HESL) lie on the Cytoplasmic side of the membrane. Residues 105-125 (EIPGATILLIVVTPSDIGAIF) traverse the membrane as a helical segment. Residues 126 to 168 (RDDLRYTGGDVCLLTSFYLINKHTKACGGIKNSFTQKDKVTYS) lie on the Extracellular side of the membrane. The chain crosses the membrane as a helical span at residues 169–189 (ICLWILFVYPILSSFAALFYL).

This sequence belongs to the Cold-regulated 413 protein family.

It localises to the cell membrane. The sequence is that of Cold-regulated 413 plasma membrane protein 3 from Arabidopsis thaliana (Mouse-ear cress).